The sequence spans 1412 residues: DNA-directed RNA polymerase subunit beta' (1412 aa).

4 residues coordinate Zn(2+): Cys-70, Cys-72, Cys-85, and Cys-88. The Mg(2+) site is built by Asp-460, Asp-462, and Asp-464. Residues Cys-819, Cys-893, Cys-900, and Cys-903 each contribute to the Zn(2+) site. The interval 1391–1412 is disordered; sequence AEESFEFGTPETPAAEQQHSGE.

Belongs to the RNA polymerase beta' chain family. In terms of assembly, the RNAP catalytic core consists of 2 alpha, 1 beta, 1 beta' and 1 omega subunit. When a sigma factor is associated with the core the holoenzyme is formed, which can initiate transcription. Mg(2+) serves as cofactor. Requires Zn(2+) as cofactor.

The enzyme catalyses RNA(n) + a ribonucleoside 5'-triphosphate = RNA(n+1) + diphosphate. DNA-dependent RNA polymerase catalyzes the transcription of DNA into RNA using the four ribonucleoside triphosphates as substrates. In Paraburkholderia xenovorans (strain LB400), this protein is DNA-directed RNA polymerase subunit beta'.